Here is a 198-residue protein sequence, read N- to C-terminus: Recombination protein RecR (198 aa).

The segment at cysteine 57–cysteine 72 adopts a C4-type zinc-finger fold. The Toprim domain maps to serine 80 to serine 175.

This sequence belongs to the RecR family.

Its function is as follows. May play a role in DNA repair. It seems to be involved in an RecBC-independent recombinational process of DNA repair. It may act with RecF and RecO. This chain is Recombination protein RecR, found in Staphylococcus aureus (strain JH1).